A 556-amino-acid chain; its full sequence is Glutamine--tRNA ligase (556 aa).

Residues proline 33–histidine 43 carry the 'HIGH' region motif. Residues glutamate 34–asparagine 36 and histidine 40–serine 46 each bind ATP. 2 residues coordinate L-glutamine: aspartate 66 and tyrosine 210. ATP is bound by residues threonine 229, arginine 259 to leucine 260, and methionine 267 to lysine 269. The 'KMSKS' region signature appears at valine 266 to arginine 270.

The protein belongs to the class-I aminoacyl-tRNA synthetase family. Monomer.

It localises to the cytoplasm. The enzyme catalyses tRNA(Gln) + L-glutamine + ATP = L-glutaminyl-tRNA(Gln) + AMP + diphosphate. The polypeptide is Glutamine--tRNA ligase (Clostridium kluyveri (strain ATCC 8527 / DSM 555 / NBRC 12016 / NCIMB 10680 / K1)).